A 477-amino-acid chain; its full sequence is Cysteine protease ATG4b (477 aa).

Positions 11–39 (SKCSSSSTSEKRDISSPTSLVSDSASSDN) are disordered. Polar residues predominate over residues 25 to 39 (SSPTSLVSDSASSDN). Residue C173 is the Nucleophile of the active site. Active-site residues include D368 and H370. The interval 453–477 (AETSSSTETSTEISGEEHEDDWQLL) is disordered. Positions 454 to 465 (ETSSSTETSTEI) are enriched in low complexity.

Belongs to the peptidase C54 family. As to quaternary structure, interacts with ATG8a and ATG8d. Constitutively expressed.

The protein resides in the cytoplasm. It catalyses the reaction [protein]-C-terminal L-amino acid-glycyl-phosphatidylethanolamide + H2O = [protein]-C-terminal L-amino acid-glycine + a 1,2-diacyl-sn-glycero-3-phosphoethanolamine. Functionally, cysteine protease that plays a key role in autophagy by mediating both proteolytic activation and delipidation of ATG8 family proteins. The protease activity is required for proteolytic activation of ATG8 family proteins: cleaves the C-terminal amino acid of ATG8 proteins to reveal a C-terminal glycine. Exposure of the glycine at the C-terminus is essential for ATG8 proteins conjugation to phosphatidylethanolamine (PE) and insertion to membranes, which is necessary for autophagy. In addition to the protease activity, also mediates delipidation of PE-conjugated ATG8 proteins. The polypeptide is Cysteine protease ATG4b (Arabidopsis thaliana (Mouse-ear cress)).